A 303-amino-acid chain; its full sequence is Glutamyl-Q tRNA(Asp) synthetase (303 aa).

Residues 16–20 and glutamate 52 contribute to the L-glutamate site; that span reads RFAPS. Residues 19-29 carry the 'HIGH' region motif; that stretch reads PSPSGPLHFGS. Residues cysteine 108, cysteine 110, tyrosine 122, and cysteine 126 each contribute to the Zn(2+) site. 2 residues coordinate L-glutamate: tyrosine 177 and arginine 195. A 'KMSKS' region motif is present at residues 233–237; the sequence is KLSKQ. Residue lysine 236 participates in ATP binding.

Belongs to the class-I aminoacyl-tRNA synthetase family. GluQ subfamily. Zn(2+) serves as cofactor.

Functionally, catalyzes the tRNA-independent activation of glutamate in presence of ATP and the subsequent transfer of glutamate onto a tRNA(Asp). Glutamate is transferred on the 2-amino-5-(4,5-dihydroxy-2-cyclopenten-1-yl) moiety of the queuosine in the wobble position of the QUC anticodon. The polypeptide is Glutamyl-Q tRNA(Asp) synthetase (Vibrio vulnificus (strain YJ016)).